A 146-amino-acid polypeptide reads, in one-letter code: Large ribosomal subunit protein uL15 (146 aa).

A compositionally biased stretch (basic and acidic residues) spans 1-13 (MKLHELKPAEGSR). The tract at residues 1 to 65 (MKLHELKPAE…PLYRRLPKRG (65 aa)) is disordered. 2 stretches are compositionally biased toward gly residues: residues 21-31 (RGIGSGNGKTA) and 42-52 (SGGGVRPGFEG).

It belongs to the universal ribosomal protein uL15 family. In terms of assembly, part of the 50S ribosomal subunit.

Its function is as follows. Binds to the 23S rRNA. The chain is Large ribosomal subunit protein uL15 from Halalkalibacterium halodurans (strain ATCC BAA-125 / DSM 18197 / FERM 7344 / JCM 9153 / C-125) (Bacillus halodurans).